A 151-amino-acid chain; its full sequence is Large ribosomal subunit protein bL9 (151 aa).

It belongs to the bacterial ribosomal protein bL9 family.

Binds to the 23S rRNA. The sequence is that of Large ribosomal subunit protein bL9 from Dehalococcoides mccartyi (strain ATCC BAA-2266 / KCTC 15142 / 195) (Dehalococcoides ethenogenes (strain 195)).